We begin with the raw amino-acid sequence, 359 residues long: 3-dehydroquinate synthase (359 aa).

NAD(+) contacts are provided by residues 69 to 74, 103 to 107, 127 to 128, K140, K149, and 167 to 170; these read DGEAYK, GVIGD, TT, and CLKT. 3 residues coordinate Zn(2+): E182, H245, and H262.

Belongs to the sugar phosphate cyclases superfamily. Dehydroquinate synthase family. The cofactor is Co(2+). Zn(2+) is required as a cofactor. NAD(+) serves as cofactor.

It localises to the cytoplasm. It catalyses the reaction 7-phospho-2-dehydro-3-deoxy-D-arabino-heptonate = 3-dehydroquinate + phosphate. The protein operates within metabolic intermediate biosynthesis; chorismate biosynthesis; chorismate from D-erythrose 4-phosphate and phosphoenolpyruvate: step 2/7. Functionally, catalyzes the conversion of 3-deoxy-D-arabino-heptulosonate 7-phosphate (DAHP) to dehydroquinate (DHQ). This is 3-dehydroquinate synthase from Aeromonas salmonicida (strain A449).